A 396-amino-acid chain; its full sequence is Acetate kinase (396 aa).

Residue N8 coordinates Mg(2+). ATP is bound at residue K15. Position 89 (R89) interacts with substrate. D146 acts as the Proton donor/acceptor in catalysis. Residues 206-210 (HIGNG), 283-285 (DMR), and 331-335 (GVGEN) each bind ATP. Position 383 (E383) interacts with Mg(2+).

Belongs to the acetokinase family. Homodimer. It depends on Mg(2+) as a cofactor. Mn(2+) is required as a cofactor.

The protein resides in the cytoplasm. The enzyme catalyses acetate + ATP = acetyl phosphate + ADP. It participates in metabolic intermediate biosynthesis; acetyl-CoA biosynthesis; acetyl-CoA from acetate: step 1/2. In terms of biological role, catalyzes the formation of acetyl phosphate from acetate and ATP. Can also catalyze the reverse reaction. In Streptococcus pneumoniae (strain Hungary19A-6), this protein is Acetate kinase.